Consider the following 73-residue polypeptide: UPF0346 protein LVIS_0790 (73 aa).

The protein belongs to the UPF0346 family.

The protein is UPF0346 protein LVIS_0790 of Levilactobacillus brevis (strain ATCC 367 / BCRC 12310 / CIP 105137 / JCM 1170 / LMG 11437 / NCIMB 947 / NCTC 947) (Lactobacillus brevis).